The chain runs to 267 residues: Thiamine thiazole synthase (267 aa).

NAD(+) contacts are provided by residues S41, E60 to R61, G68, V132, and H160 to D162. Fe cation-binding residues include D162 and H177. NAD(+) is bound at residue M227. R237 serves as a coordination point for glycine.

Belongs to the THI4 family. As to quaternary structure, homooctamer; tetramer of dimers. Fe(2+) serves as cofactor.

The catalysed reaction is hydrogen sulfide + glycine + NAD(+) = ADP-5-ethyl-4-methylthiazole-2-carboxylate + nicotinamide + 3 H2O + H(+). It functions in the pathway cofactor biosynthesis; thiamine diphosphate biosynthesis. In terms of biological role, involved in the biosynthesis of the thiazole moiety of thiamine. Catalyzes the conversion of NAD and glycine to adenosine diphosphate 5-(2-hydroxyethyl)-4-methylthiazole-2-carboxylate (ADT), an adenylated thiazole intermediate, using free sulfide as a source of sulfur. In Saccharolobus islandicus (strain Y.N.15.51 / Yellowstone #2) (Sulfolobus islandicus), this protein is Thiamine thiazole synthase.